A 353-amino-acid polypeptide reads, in one-letter code: Ribosomal RNA large subunit methyltransferase M (353 aa).

S-adenosyl-L-methionine-binding positions include S179, 212 to 215 (APGG), D231, D251, and D267. K296 (proton acceptor) is an active-site residue.

It belongs to the class I-like SAM-binding methyltransferase superfamily. RNA methyltransferase RlmE family. RlmM subfamily. As to quaternary structure, monomer.

The protein localises to the cytoplasm. It carries out the reaction cytidine(2498) in 23S rRNA + S-adenosyl-L-methionine = 2'-O-methylcytidine(2498) in 23S rRNA + S-adenosyl-L-homocysteine + H(+). Its function is as follows. Catalyzes the 2'-O-methylation at nucleotide C2498 in 23S rRNA. The sequence is that of Ribosomal RNA large subunit methyltransferase M from Laribacter hongkongensis (strain HLHK9).